The chain runs to 337 residues: MSQVTARVLNSGMRLPPLPTIRELVKLYKLQAMKQLSQNFLMDERLTDKIVKSAGRIDPRDIVLEVGPGPGGITRSILRRQPQRLILVEKDRRFGETLQLLRECASPLDMQVDIYYDDILRFNIEQHIPDTTQRIHLIGNLPFSISTRLLINWYADLAARRGAFRRNDTCMTLTFQKEVAERICAPVGSEQRCRLSVMSQIWTEPVMKFIIPGKAFVPKPQVDVGVVKLIPLKQPKTQLPFSLVERVVRHIFSMRQKYCRRGYGTLLPPDSREETTQTLFQRADVRDTLRSFELSVPQCLRLADAYAEYIKEHPEVEAYDYRGPKNPDVSGAAAASS.

The transit peptide at 1–84 directs the protein to the mitochondrion; that stretch reads MSQVTARVLN…RSILRRQPQR (84 aa). Residues 38–41, Asn39, Leu41, Gly67, Glu89, Asp118, and Asn140 each bind S-adenosyl-L-methionine; that span reads QNFL.

It belongs to the class I-like SAM-binding methyltransferase superfamily. rRNA adenine N(6)-methyltransferase family. KsgA subfamily.

Its subcellular location is the mitochondrion. Probable S-adenosyl-L-methionine-dependent methyltransferase which specifically dimethylates mitochondrial 12S rRNA at the conserved stem loop. The protein is Dimethyladenosine transferase 1, mitochondrial (mtTFB1) of Drosophila pseudoobscura pseudoobscura (Fruit fly).